We begin with the raw amino-acid sequence, 389 residues long: Chalcone synthase 1A (389 aa).

The active site involves Cys-164.

Belongs to the thiolase-like superfamily. Chalcone/stilbene synthases family.

It carries out the reaction (E)-4-coumaroyl-CoA + 3 malonyl-CoA + 3 H(+) = 2',4,4',6'-tetrahydroxychalcone + 3 CO2 + 4 CoA. It functions in the pathway secondary metabolite biosynthesis; flavonoid biosynthesis. The primary product of this enzyme is 4,2',4',6'-tetrahydroxychalcone (also termed naringenin-chalcone or chalcone) which can under specific conditions spontaneously isomerize into naringenin. This is Chalcone synthase 1A (CHS1A) from Solanum tuberosum (Potato).